A 334-amino-acid chain; its full sequence is Glycerol-3-phosphate dehydrogenase [NAD(P)+] (334 aa).

NADPH is bound by residues serine 14, tyrosine 15, histidine 35, and lysine 109. Sn-glycerol 3-phosphate-binding residues include lysine 109, glycine 138, and threonine 140. Position 142 (alanine 142) interacts with NADPH. Sn-glycerol 3-phosphate contacts are provided by lysine 194, aspartate 247, serine 257, arginine 258, and asparagine 259. The Proton acceptor role is filled by lysine 194. Arginine 258 is a binding site for NADPH. 2 residues coordinate NADPH: valine 282 and glutamate 284.

This sequence belongs to the NAD-dependent glycerol-3-phosphate dehydrogenase family.

The protein localises to the cytoplasm. The catalysed reaction is sn-glycerol 3-phosphate + NAD(+) = dihydroxyacetone phosphate + NADH + H(+). The enzyme catalyses sn-glycerol 3-phosphate + NADP(+) = dihydroxyacetone phosphate + NADPH + H(+). It functions in the pathway membrane lipid metabolism; glycerophospholipid metabolism. Catalyzes the reduction of the glycolytic intermediate dihydroxyacetone phosphate (DHAP) to sn-glycerol 3-phosphate (G3P), the key precursor for phospholipid synthesis. The protein is Glycerol-3-phosphate dehydrogenase [NAD(P)+] of Tolumonas auensis (strain DSM 9187 / NBRC 110442 / TA 4).